The primary structure comprises 405 residues: Probable tRNA sulfurtransferase (405 aa).

The THUMP domain occupies 60–165 (DKVMGRLKLV…LNGIFLSSET (106 aa)). ATP is bound by residues 183-184 (ML), 208-209 (HF), Arg-265, Gly-287, and Gln-296.

The protein belongs to the ThiI family.

The protein resides in the cytoplasm. The catalysed reaction is [ThiI sulfur-carrier protein]-S-sulfanyl-L-cysteine + a uridine in tRNA + 2 reduced [2Fe-2S]-[ferredoxin] + ATP + H(+) = [ThiI sulfur-carrier protein]-L-cysteine + a 4-thiouridine in tRNA + 2 oxidized [2Fe-2S]-[ferredoxin] + AMP + diphosphate. The enzyme catalyses [ThiS sulfur-carrier protein]-C-terminal Gly-Gly-AMP + S-sulfanyl-L-cysteinyl-[cysteine desulfurase] + AH2 = [ThiS sulfur-carrier protein]-C-terminal-Gly-aminoethanethioate + L-cysteinyl-[cysteine desulfurase] + A + AMP + 2 H(+). It functions in the pathway cofactor biosynthesis; thiamine diphosphate biosynthesis. Functionally, catalyzes the ATP-dependent transfer of a sulfur to tRNA to produce 4-thiouridine in position 8 of tRNAs, which functions as a near-UV photosensor. Also catalyzes the transfer of sulfur to the sulfur carrier protein ThiS, forming ThiS-thiocarboxylate. This is a step in the synthesis of thiazole, in the thiamine biosynthesis pathway. The sulfur is donated as persulfide by IscS. The polypeptide is Probable tRNA sulfurtransferase (Lactiplantibacillus plantarum (strain ATCC BAA-793 / NCIMB 8826 / WCFS1) (Lactobacillus plantarum)).